Reading from the N-terminus, the 361-residue chain is Tyrosine--tRNA ligase (361 aa).

Residues Tyr36, Tyr162, Gln166, Asp169, and Gln184 each contribute to the L-tyrosine site. A 'KMSKS' region motif is present at residues Lys236–Ser240. Lys239 contacts ATP.

It belongs to the class-I aminoacyl-tRNA synthetase family. TyrS type 4 subfamily. In terms of assembly, homodimer.

Its subcellular location is the cytoplasm. The enzyme catalyses tRNA(Tyr) + L-tyrosine + ATP = L-tyrosyl-tRNA(Tyr) + AMP + diphosphate + H(+). Functionally, catalyzes the attachment of tyrosine to tRNA(Tyr) in a two-step reaction: tyrosine is first activated by ATP to form Tyr-AMP and then transferred to the acceptor end of tRNA(Tyr). The polypeptide is Tyrosine--tRNA ligase (Saccharolobus islandicus (strain L.S.2.15 / Lassen #1) (Sulfolobus islandicus)).